The sequence spans 459 residues: Interleukin-1 receptor-associated kinase 4 (459 aa).

Residue Met1 is modified to N-acetylmethionine. The 85-residue stretch at 20 to 104 (RKLSDFIDPQ…APATLLLPDA (85 aa)) folds into the Death domain. Position 34 is an N6-acetyllysine (Lys34). Residues 115–161 (REAATVAQTHGPCQEKDRTSVMPMPKLEHSCEPPDSSSPDNRSVESS) form a disordered region. The region spanning 186 to 454 (SAGGNRMGEG…PDIAKVQQLL (269 aa)) is the Protein kinase domain. ATP is bound by residues 192–200 (MGEGGFGVV) and Lys213. The active-site Proton acceptor is Asp311. Residues 313–316 (KSAN) and Asp329 contribute to the ATP site. 2 positions are modified to phosphothreonine: Thr342 and Thr345. A Phosphoserine modification is found at Ser346.

It belongs to the protein kinase superfamily. TKL Ser/Thr protein kinase family. Pelle subfamily. Associates with MYD88 and IRAK2 to form a ternary complex called the Myddosome. Once phosphorylated, IRAK4 dissociates from the receptor complex and then associates with the TNF receptor-associated factor 6 (TRAF6), IRAK1, and PELI1; this intermediate complex is required for subsequent NF-kappa-B activation. Direct binding of SMAD6 to PELI1 prevents complex formation and hence negatively regulates IL1R-TLR signaling and eventually NF-kappa-B-mediated gene expression. Interacts with IL1RL1. Interacts (when phosphorylated) with IRAK1. May interact (when phosphorylated) with IRAK3. Requires Mg(2+) as cofactor. Post-translationally, phosphorylated.

It localises to the cytoplasm. It carries out the reaction L-seryl-[protein] + ATP = O-phospho-L-seryl-[protein] + ADP + H(+). The catalysed reaction is L-threonyl-[protein] + ATP = O-phospho-L-threonyl-[protein] + ADP + H(+). Its function is as follows. Serine/threonine-protein kinase that plays a critical role in initiating innate immune response against foreign pathogens. Involved in Toll-like receptor (TLR) and IL-1R signaling pathways. Is rapidly recruited by MYD88 to the receptor-signaling complex upon TLR activation to form the Myddosome together with IRAK2. Phosphorylates initially IRAK1, thus stimulating the kinase activity and intensive autophosphorylation of IRAK1. Phosphorylates E3 ubiquitin ligases Pellino proteins (PELI1, PELI2 and PELI3) to promote pellino-mediated polyubiquitination of IRAK1. Then, the ubiquitin-binding domain of IKBKG/NEMO binds to polyubiquitinated IRAK1 bringing together the IRAK1-MAP3K7/TAK1-TRAF6 complex and the NEMO-IKKA-IKKB complex. In turn, MAP3K7/TAK1 activates IKKs (CHUK/IKKA and IKBKB/IKKB) leading to NF-kappa-B nuclear translocation and activation. Alternatively, phosphorylates TIRAP to promote its ubiquitination and subsequent degradation. Phosphorylates NCF1 and regulates NADPH oxidase activation after LPS stimulation suggesting a similar mechanism during microbial infections. This is Interleukin-1 receptor-associated kinase 4 (Irak4) from Mus musculus (Mouse).